Here is a 171-residue protein sequence, read N- to C-terminus: PBAN-type neuropeptides (171 aa).

The signal sequence occupies residues 1-22 (MFRLYFFFNVICIFLAIRSAIG). Positions 23 to 47 (GEVPDATEQKINNFLASGKDSEDLS) are excised as a propeptide. Leu-59 carries the post-translational modification Leucine amide. Residues 63 to 111 (TIASELHDEMMDEIDDNPLYYSGESPQRVASEIAQGTPYVVLLLTGRVL) constitute a propeptide that is removed on maturation. A disordered region spans residues 120–151 (HSTTPRLGRRDASSSNENNSRPPFAPRLGRNL). Leu-126, Leu-147, and Leu-157 each carry leucine amide. Residues 160–171 (SFGAPVVDNFAY) constitute a propeptide that is removed on maturation.

This sequence belongs to the pyrokinin family.

The protein localises to the secreted. Its function is as follows. A hormone that controls sex pheromone production in females and pheromone responsiveness in male. Also mediates visceral muscle contractile activity (myotropic activity). This is PBAN-type neuropeptides from Aedes aegypti (Yellowfever mosquito).